The chain runs to 154 residues: dCTP deaminase (154 aa).

DCTP is bound by residues 79 to 84 (RSSLAR), D95, Q124, and Y138.

The protein belongs to the dCTP deaminase family. In terms of assembly, homotrimer.

The catalysed reaction is dCTP + H2O + H(+) = dUTP + NH4(+). Its pathway is pyrimidine metabolism; dUMP biosynthesis; dUMP from dCTP (dUTP route): step 1/2. Catalyzes the deamination of dCTP to dUTP. The protein is dCTP deaminase of Pyrococcus abyssi (strain GE5 / Orsay).